The sequence spans 735 residues: Muskelin (735 aa).

N-acetylalanine is present on A2. The LisH domain maps to R172–L204. The CTLH domain occupies H206–S258. 6 Kelch repeats span residues T284 to K330, Q339 to Q391, I408 to G458, C469 to T515, E526 to E578, and V597 to D651.

Homodimer; may form higher oligomers. Identified in the CTLH complex that contains GID4, RANBP9 and/or RANBP10, MKLN1, MAEA, RMND5A (or alternatively its paralog RMND5B), GID8, ARMC8, WDR26 and YPEL5. Within this complex, MAEA, RMND5A (or alternatively its paralog RMND5B), GID8, WDR26, and RANBP9 and/or RANBP10 form the catalytic core, while GID4, MKLN1, ARMC8 and YPEL5 have ancillary roles. Interacts with RANBP9. Part of a complex consisting of RANBP9, MKLN1 and GID8. Interacts with GABRA1. Interacts with the C-terminal tail of PTGER3.

The protein localises to the cytoplasm. Its subcellular location is the cytosol. It localises to the nucleus. It is found in the nucleoplasm. The protein resides in the cell projection. The protein localises to the ruffle. Its subcellular location is the cell cortex. It localises to the synapse. It is found in the postsynapse. Its function is as follows. Component of the CTLH E3 ubiquitin-protein ligase complex that selectively accepts ubiquitin from UBE2H and mediates ubiquitination and subsequent proteasomal degradation of the transcription factor HBP1. Required for internalization of the GABA receptor GABRA1 from the cell membrane via endosomes and subsequent GABRA1 degradation. Acts as a mediator of cell spreading and cytoskeletal responses to the extracellular matrix component THBS1. The protein is Muskelin (MKLN1) of Homo sapiens (Human).